A 379-amino-acid chain; its full sequence is MRMSAAMFSSFRCKTRSSKVMLRRGRKRRRRIEDALVAPEIPLDLLIEILTKLPAKSLMRFKCVSKLWSSLIRSRFFSNCYLTVKTPRRPPRLYMSLVDHLLCNSLMVCHYPCESVLLSSSSSAESLEQNLTIAGMGGRNMVVLRGLILYVVCRTASIYNPTTRQSVTLPAVKSNILAQKSHWNSLLYFFGYDPVLDQYKVVCTVALFSKRLKRITSEHWVFVLEPGGSWKRIEFDQPHLPTRLGLCVNGVIYYLASTWKRRDIVVSFDVRSEEFSMIQGPLKVSAFSESVGFIEYGGKPAVFDYTMMKQTGLVDLWVLEDAGKWSRKSLVLQPCQMHLVDNDIEFNVEGTTQNGEVILAPETIISPYYILFMTSKRMI.

The F-box domain occupies 35–84; it reads ALVAPEIPLDLLIEILTKLPAKSLMRFKCVSKLWSSLIRSRFFSNCYLTV.

This Arabidopsis thaliana (Mouse-ear cress) protein is Putative F-box protein At5g62660.